A 319-amino-acid polypeptide reads, in one-letter code: NADH-quinone oxidoreductase subunit H 1 (319 aa).

A run of 9 helical transmembrane segments spans residues 5-25 (ILTA…AGVF), 78-98 (LAPA…AFGE), 109-129 (VMFL…GALA), 147-167 (LAYE…AGSL), 179-199 (VWFI…GIAA), 214-234 (LVGG…FLGE), 238-258 (ILLV…GPWL), 262-282 (IWFG…RAAL), and 294-314 (AWKV…FIVV).

This sequence belongs to the complex I subunit 1 family. As to quaternary structure, NDH-1 is composed of 14 different subunits. Subunits NuoA, H, J, K, L, M, N constitute the membrane sector of the complex.

The protein resides in the cell inner membrane. It catalyses the reaction a quinone + NADH + 5 H(+)(in) = a quinol + NAD(+) + 4 H(+)(out). NDH-1 shuttles electrons from NADH, via FMN and iron-sulfur (Fe-S) centers, to quinones in the respiratory chain. The immediate electron acceptor for the enzyme in this species is believed to be ubiquinone. Couples the redox reaction to proton translocation (for every two electrons transferred, four hydrogen ions are translocated across the cytoplasmic membrane), and thus conserves the redox energy in a proton gradient. This subunit may bind ubiquinone. In Rhodopseudomonas palustris (strain BisA53), this protein is NADH-quinone oxidoreductase subunit H 1.